Reading from the N-terminus, the 350-residue chain is Protein TRIGALACTOSYLDIACYLGLYCEROL 1, chloroplastic (350 aa).

A disordered region spans residues 67–86 (SMSMLEEETSTENNAPSQEA). The chain crosses the membrane as a helical span at residues 98-117 (YIWRGLSVPIIAGQVVLRIL). At 118-136 (KGKIHWRNTLQQLERTGPK) the chain is on the stromal side. A helical membrane pass occupies residues 137–157 (SLGVCLLTSTFVGMAFTIQFV). Residues 158-168 (REFTRLGLNRS) lie on the Chloroplast intermembrane side of the membrane. Residues 169-189 (IGGVLALAFSRELSPVITSIV) form a helical membrane-spanning segment. Residues 190-229 (VAGRMGSAFAAELGTMQVSEQTDTLRVLGADPIDYLITPR) are Stromal-facing. The helical transmembrane segment at 230–250 (VIASCLALPFLTLMCFTVGMA) threads the bilayer. The Chloroplast intermembrane portion of the chain corresponds to 251–288 (SSALLSDAVYGISINIIMDSAHRALRPWDIVSAMIKSQ). Residues 289–309 (VFGAIISVISCSWGVTTTGGA) form a helical membrane-spanning segment. Over 310–318 (KGVGESTTS) the chain is Stromal. Residues 319–339 (AVVMSLVGIFIADFVLSSFFF) form a helical membrane-spanning segment. Residues 340–350 (QGAGDSLKNCV) are Chloroplast intermembrane-facing.

This sequence belongs to the MlaE permease family. As to quaternary structure, permease subunit of the TGD complex, a lipid translocator at the inner chloroplast envelope membrane made of TGD1, TGD2 and TGD3. Interacts with TGD2 and TGD3 with an overall subunit stoichiometry of 2 TGD1, 2 TGD3 and 8 to 12 TGD2. Interacts with TGD5. High levels in green tissues, but low levels in nongreen tissues such as roots.

The protein localises to the plastid. It is found in the chloroplast inner membrane. Required during embryogenesis. Permease involved in lipid transfer from the endoplasmic reticulum (ER) to plastids, and necessary for thylakoids formation. This is Protein TRIGALACTOSYLDIACYLGLYCEROL 1, chloroplastic from Arabidopsis thaliana (Mouse-ear cress).